The sequence spans 259 residues: Deoxyribose-phosphate aldolase (259 aa).

The active-site Proton donor/acceptor is the aspartate 102. Lysine 167 acts as the Schiff-base intermediate with acetaldehyde in catalysis. The active-site Proton donor/acceptor is the lysine 201.

Belongs to the DeoC/FbaB aldolase family. DeoC type 2 subfamily.

The protein localises to the cytoplasm. It carries out the reaction 2-deoxy-D-ribose 5-phosphate = D-glyceraldehyde 3-phosphate + acetaldehyde. It participates in carbohydrate degradation; 2-deoxy-D-ribose 1-phosphate degradation; D-glyceraldehyde 3-phosphate and acetaldehyde from 2-deoxy-alpha-D-ribose 1-phosphate: step 2/2. In terms of biological role, catalyzes a reversible aldol reaction between acetaldehyde and D-glyceraldehyde 3-phosphate to generate 2-deoxy-D-ribose 5-phosphate. This is Deoxyribose-phosphate aldolase from Photorhabdus laumondii subsp. laumondii (strain DSM 15139 / CIP 105565 / TT01) (Photorhabdus luminescens subsp. laumondii).